The chain runs to 398 residues: MARGALDWIGAELEALDAKGLRRSLEPIGPAQGPVVQVGGRALVNLCSNDYLGLAADPRVRAAAADAAMRFGAGSGAARLVAGDLPPHGALEARLAAWKGREAALLFGSGYHANAGVPGALVGRDDAVFSDVLNHASIVDGCLLSRAELVRYRHCDVEELAGLLARTRARRKLVVTDAIFSMDGDAAPLRELAELCDRHGAMLYVDEAHAAGVLGPNGAGLAEALGVQDRVDVHMGTLGKALGAFGAYVAGERRLIELLVSRARPFVFSTALPPPACAAALAALEVVATEPSRRTHLFALCARMQAGLARLGFDVARVASPIFPVVLGTEARALAAAAALRERGWFVRAIRPPTVPHGTSRLRVALSAAHDAAQVDGFLAALAAVLPDLPPAGPRRAG.

A substrate-binding site is contributed by Arg23. A pyridoxal 5'-phosphate-binding site is contributed by 110-111 (GY). His135 provides a ligand contact to substrate. Pyridoxal 5'-phosphate is bound by residues Ser181, His209, and Thr237. Position 240 is an N6-(pyridoxal phosphate)lysine (Lys240). A substrate-binding site is contributed by Thr354.

The protein belongs to the class-II pyridoxal-phosphate-dependent aminotransferase family. BioF subfamily. In terms of assembly, homodimer. Requires pyridoxal 5'-phosphate as cofactor.

It carries out the reaction 6-carboxyhexanoyl-[ACP] + L-alanine + H(+) = (8S)-8-amino-7-oxononanoate + holo-[ACP] + CO2. It functions in the pathway cofactor biosynthesis; biotin biosynthesis. In terms of biological role, catalyzes the decarboxylative condensation of pimeloyl-[acyl-carrier protein] and L-alanine to produce 8-amino-7-oxononanoate (AON), [acyl-carrier protein], and carbon dioxide. The sequence is that of 8-amino-7-oxononanoate synthase from Anaeromyxobacter dehalogenans (strain 2CP-1 / ATCC BAA-258).